The chain runs to 405 residues: MDTIFLWSLLLLFFGSQASRCSAQKNTEFAVDLYQEVSLSHKDNIIFSPLGITLVLEMVQLGAKGKAQQQIRQTLKQQETSAGEEFFVLKSFFSAISEKKQEFTFNLANALYLQEGFTVKEQYLHGNKEFFQSAIKLVDFQDAKACAEMISTWVERKTDGKIKDMFSGEEFGPLTRLVLVNAIYFKGDWKQKFRKEDTQLINFTKKNGSTVKIPMMKALLRTKYGYFSESSLNYQVLELSYKGDEFSLIIILPAEGMDIEEVEKLITAQQILKWLSEMQEEEVEISLPRFKVEQKVDFKDVLYSLNITEIFSGGCDLSGITDSSEVYVSQVTQKVFFEINEDGSEAATSTGIHIPVIMSLAQSQFIANHPFLFIMKHNPTESILFMGRVTNPDTQEIKGRDLDSL.

The signal sequence occupies residues Met1–Ala18. 3 N-linked (GlcNAc...) asparagine glycosylation sites follow: Asn202, Asn207, and Asn306.

This sequence belongs to the serpin family. Expressed in pancreas and adipose tissues.

It localises to the secreted. The sequence is that of Serpin I2 (SERPINI2) from Homo sapiens (Human).